The sequence spans 426 residues: Melibiose/raffinose/stachyose-binding protein MelE (426 aa).

The first 18 residues, 1–18 (MKHTFVLFLSLILLVLPG), serve as a signal peptide directing secretion. Residue C19 is the site of N-palmitoyl cysteine attachment. Residue C19 is the site of S-diacylglycerol cysteine attachment.

The protein belongs to the bacterial solute-binding protein 1 family. In terms of assembly, the complex is composed of two ATP-binding proteins (MsmX), two transmembrane proteins (MelC and MelD) and a solute-binding protein (MelE).

Its subcellular location is the cell membrane. Its function is as follows. Part of the ABC transporter complex MelEDC-MsmX involved in melibiose, raffinose and stachyose import. Binds melibiose, raffinose and stachyose. The sequence is that of Melibiose/raffinose/stachyose-binding protein MelE from Bacillus subtilis (strain 168).